Here is a 159-residue protein sequence, read N- to C-terminus: Phosphopantetheine adenylyltransferase (159 aa).

His-16 is a binding site for ATP. Substrate-binding residues include Lys-40, Met-72, and Arg-86. ATP contacts are provided by residues 87–89 (GLR), Glu-97, and 122–128 (YQYLSAS).

This sequence belongs to the bacterial CoaD family. As to quaternary structure, homohexamer. Requires Mg(2+) as cofactor.

It is found in the cytoplasm. The catalysed reaction is (R)-4'-phosphopantetheine + ATP + H(+) = 3'-dephospho-CoA + diphosphate. The protein operates within cofactor biosynthesis; coenzyme A biosynthesis; CoA from (R)-pantothenate: step 4/5. Reversibly transfers an adenylyl group from ATP to 4'-phosphopantetheine, yielding dephospho-CoA (dPCoA) and pyrophosphate. The protein is Phosphopantetheine adenylyltransferase of Dehalococcoides mccartyi (strain CBDB1).